A 199-amino-acid chain; its full sequence is MAKVLVLYYSAYGHIEQMAEAAAAGAREAGATVDIKRVPDLVPEEVAKSAHFKLDQKAPIATVAELAEYDAIIVGVGTRFGRMASQMANFLDQAGGLWARGALNGKVGGAFTSTATQHGGQEVTLFSIITNLMHFGMVIVGLDYGYGAQMTLDEVTGGSPYGATTITGGDGSRQPSAIELDGARYQGRKIAETAIKLHG.

The Flavodoxin-like domain maps to 4–190 (VLVLYYSAYG…DGARYQGRKI (187 aa)). Residues 10–15 (SAYGHI) and 78–80 (TRF) each bind FMN. Y12 is a binding site for NAD(+). A substrate-binding site is contributed by W98. FMN-binding positions include 113–119 (STATQHG) and H134.

It belongs to the WrbA family. Requires FMN as cofactor.

The catalysed reaction is a quinone + NADH + H(+) = a quinol + NAD(+). It catalyses the reaction a quinone + NADPH + H(+) = a quinol + NADP(+). The protein is NAD(P)H dehydrogenase (quinone) of Xanthobacter autotrophicus (strain ATCC BAA-1158 / Py2).